Consider the following 100-residue polypeptide: Large ribosomal subunit protein uL23 (100 aa).

Belongs to the universal ribosomal protein uL23 family. Part of the 50S ribosomal subunit. Contacts protein L29, and trigger factor when it is bound to the ribosome.

In terms of biological role, one of the early assembly proteins it binds 23S rRNA. One of the proteins that surrounds the polypeptide exit tunnel on the outside of the ribosome. Forms the main docking site for trigger factor binding to the ribosome. The chain is Large ribosomal subunit protein uL23 from Shewanella sp. (strain MR-4).